A 473-amino-acid polypeptide reads, in one-letter code: H(+)/Cl(-) exchange transporter ClcA (473 aa).

Over 1–32 the chain is Cytoplasmic; sequence MKTDTSTFLAQQIVRLRRRDQIRRLMQRDKTP. The helical transmembrane segment at 33–69 threads the bilayer; it reads LAILFMAAVVGTLTGLVGVAFEKAVSWVQNMRIGALV. The Periplasmic portion of the chain corresponds to 70–76; sequence QVADHAF. The chain crosses the membrane as a helical span at residues 77 to 100; it reads LLWPLAFILSALLAMVGYFLVRKF. The Selectivity filter part_1 motif lies at 106-110; sequence GSGIP. Serine 107 provides a ligand contact to chloride. The helical intramembrane region spans 109–116; the sequence is IPEIEGAL. The Cytoplasmic portion of the chain corresponds to 117-123; sequence EELRPVR. 2 helical membrane passes run 124 to 141 and 148 to 166; these read WWRV…TLGA and EGPT…LDVF. Residues 146-150 carry the Selectivity filter part_2 motif; it reads GREGP. Over 167 to 176 the chain is Cytoplasmic; sequence RMRSAEARHT. Intramembrane regions (helical) lie at residues 177-189 and 193-201; these read LLAT…LSAA and PLAGILFII. Residues 202 to 214 are Cytoplasmic-facing; the sequence is EEMRPQFRYNLIS. Residues 215-232 form a helical membrane-spanning segment; that stretch reads IKAVFTGVIMSSIVFRIF. Topologically, residues 233 to 252 are periplasmic; sequence NGEAPIIEVGKLSDAPVNTL. A helical transmembrane segment spans residues 253–281; it reads WLYLILGIIFGCVGPVFNSLVLRTQDMFQ. Residues 282-287 lie on the Cytoplasmic side of the membrane; the sequence is RFHGGE. A helical membrane pass occupies residues 288-309; the sequence is IKKWVLMGGAIGGLCGILGLIE. Residues 310–329 lie on the Periplasmic side of the membrane; it reads PEAAGGGFNLIPIAAAGNFS. The next 2 helical transmembrane spans lie at 330–349 and 355–376; these read VGLL…LCFS and GIFA…MAAA. The Selectivity filter part_3 motif lies at 355–359; the sequence is GIFAP. 2 residues coordinate chloride: isoleucine 356 and phenylalanine 357. Over 377-386 the chain is Periplasmic; it reads VLFPQYHLEA. Positions 387–401 form an intramembrane region, helical; it reads GTFAIAGMGALMAAS. An intramembrane region (note=Loop between two helices) is located at residues 402–404; sequence VRA. An intramembrane region (helical) is located at residues 405–416; sequence PLTGIVLVLEMT. An intramembrane region (note=Loop between two helices) is located at residues 417–421; sequence DNYQL. Residues 422–438 form a helical membrane-spanning segment; sequence ILPMIITCLGATLLAQF. Residues 439 to 473 lie on the Cytoplasmic side of the membrane; the sequence is LGGKPLYSTILARTLAKQDAEQAAKSQNAPAGENT. Tyrosine 445 contributes to the chloride binding site.

It belongs to the chloride channel (TC 2.A.49) family. ClcA subfamily. In terms of assembly, homodimer.

It localises to the cell inner membrane. It carries out the reaction 2 chloride(in) + H(+)(out) = 2 chloride(out) + H(+)(in). Proton-coupled chloride transporter. Functions as antiport system and exchanges two chloride ions for 1 proton. Probably acts as an electrical shunt for an outwardly-directed proton pump that is linked to amino acid decarboxylation, as part of the extreme acid resistance (XAR) response. The protein is H(+)/Cl(-) exchange transporter ClcA of Salmonella gallinarum (strain 287/91 / NCTC 13346).